We begin with the raw amino-acid sequence, 257 residues long: MLAKRLVPCLDVKDGKVVKGVQFRNHEIVGDIVPLAARYAEEGADELVFYDITASAHERVVDKSWVSRVAEQIDIPFCVAGGIKTISQARELLAFGADKISINSPALTDPSLISRLQDEFGRQCIVIGIDSFFDASSNSYKVKQFTGDEAATKDTQWFTQDWVEEVQKRGCGEIVLNVMNQDGVRGGYDIKQLSLVRAICDVPLIASGGAGTMAHFRDVFIEAKVDAALAASVFHKAIINIGELKAYLAAEGIAIRR.

Catalysis depends on residues D11 and D130.

This sequence belongs to the HisA/HisF family. Heterodimer of HisH and HisF.

It localises to the cytoplasm. It carries out the reaction 5-[(5-phospho-1-deoxy-D-ribulos-1-ylimino)methylamino]-1-(5-phospho-beta-D-ribosyl)imidazole-4-carboxamide + L-glutamine = D-erythro-1-(imidazol-4-yl)glycerol 3-phosphate + 5-amino-1-(5-phospho-beta-D-ribosyl)imidazole-4-carboxamide + L-glutamate + H(+). It functions in the pathway amino-acid biosynthesis; L-histidine biosynthesis; L-histidine from 5-phospho-alpha-D-ribose 1-diphosphate: step 5/9. Functionally, IGPS catalyzes the conversion of PRFAR and glutamine to IGP, AICAR and glutamate. The HisF subunit catalyzes the cyclization activity that produces IGP and AICAR from PRFAR using the ammonia provided by the HisH subunit. The sequence is that of Imidazole glycerol phosphate synthase subunit HisF from Shewanella sp. (strain W3-18-1).